A 187-amino-acid polypeptide reads, in one-letter code: Protein GrpE (187 aa).

It belongs to the GrpE family. As to quaternary structure, homodimer.

The protein localises to the cytoplasm. Its function is as follows. Participates actively in the response to hyperosmotic and heat shock by preventing the aggregation of stress-denatured proteins, in association with DnaK and GrpE. It is the nucleotide exchange factor for DnaK and may function as a thermosensor. Unfolded proteins bind initially to DnaJ; upon interaction with the DnaJ-bound protein, DnaK hydrolyzes its bound ATP, resulting in the formation of a stable complex. GrpE releases ADP from DnaK; ATP binding to DnaK triggers the release of the substrate protein, thus completing the reaction cycle. Several rounds of ATP-dependent interactions between DnaJ, DnaK and GrpE are required for fully efficient folding. This Albidiferax ferrireducens (strain ATCC BAA-621 / DSM 15236 / T118) (Rhodoferax ferrireducens) protein is Protein GrpE.